The sequence spans 530 residues: UDP-glucuronosyltransferase 2B17 (530 aa).

The N-terminal stretch at 1–23 (MPGKWISALLLLQISCCFQSGNC) is a signal peptide. The chain crosses the membrane as a helical span at residues 494-510 (VIGFLLTCSAVIAVLTV).

Belongs to the UDP-glycosyltransferase family.

It localises to the endoplasmic reticulum membrane. The catalysed reaction is glucuronate acceptor + UDP-alpha-D-glucuronate = acceptor beta-D-glucuronoside + UDP + H(+). It carries out the reaction 17alpha-estradiol + UDP-alpha-D-glucuronate = 17alpha-estradiol 3-O-(beta-D-glucuronate) + UDP + H(+). The enzyme catalyses 17alpha-estradiol + UDP-alpha-D-glucuronate = 17alpha-estradiol 17-O-(beta-D-glucuronate) + UDP + H(+). It catalyses the reaction 17beta-estradiol + UDP-alpha-D-glucuronate = 17beta-estradiol 17-O-(beta-D-glucuronate) + UDP + H(+). The catalysed reaction is 17beta-hydroxy-5alpha-androstan-3-one + UDP-alpha-D-glucuronate = 5alpha-dihydrotestosterone 17-O-(beta-D-glucuronate) + UDP + H(+). It carries out the reaction testosterone + UDP-alpha-D-glucuronate = testosterone 17-O-(beta-D-glucuronate) + UDP + H(+). In terms of biological role, UDP-glucuronosyltransferase (UGT) that catalyzes phase II biotransformation reactions in which lipophilic substrates are conjugated with glucuronic acid to increase the metabolite's water solubility, thereby facilitating excretion into either the urine or bile. Catalyzes the glucuronidation of endogenous steroid hormones such as androgens (epitestosterone, androsterone) and estrogens (estradiol, epiestradiol). This Rattus norvegicus (Rat) protein is UDP-glucuronosyltransferase 2B17.